A 258-amino-acid chain; its full sequence is Phosphate import ATP-binding protein PstB (258 aa).

The ABC transporter domain occupies 5–247; it reads IETKDLDIYY…ERIFSNPKEK (243 aa). 37–44 is a binding site for ATP; sequence GPSGCGKS.

Belongs to the ABC transporter superfamily. Phosphate importer (TC 3.A.1.7) family. As to quaternary structure, the complex is composed of two ATP-binding proteins (PstB), two transmembrane proteins (PstC and PstA) and a solute-binding protein (PstS).

It localises to the cell membrane. The catalysed reaction is phosphate(out) + ATP + H2O = ADP + 2 phosphate(in) + H(+). Part of the ABC transporter complex PstSACB involved in phosphate import. Responsible for energy coupling to the transport system. The polypeptide is Phosphate import ATP-binding protein PstB (Cutibacterium acnes (strain DSM 16379 / KPA171202) (Propionibacterium acnes)).